Here is a 213-residue protein sequence, read N- to C-terminus: Thymidylate kinase (213 aa).

Residue 10-17 participates in ATP binding; that stretch reads GLEGAGKT.

This sequence belongs to the thymidylate kinase family.

It carries out the reaction dTMP + ATP = dTDP + ADP. Its function is as follows. Phosphorylation of dTMP to form dTDP in both de novo and salvage pathways of dTTP synthesis. The sequence is that of Thymidylate kinase from Escherichia coli O1:K1 / APEC.